The chain runs to 242 residues: Protein CDV3 homolog B (242 aa).

Residues 1–15 (MAEPEERSLDDFFAK) are compositionally biased toward basic and acidic residues. The segment at 1 to 242 (MAEPEERSLD…DNQYAVLGEQ (242 aa)) is disordered. An N-acetylalanine modification is found at Ala2. Over residues 30–57 (AAGSRGPARPSDGATSSSLSSYVSAAGK) the composition is skewed to low complexity. Residues 59 to 75 (VKKEKSGKSENPDQLQE) are compositionally biased toward basic and acidic residues. Over residues 105 to 122 (KEDDENENKEEQGADWEE) the composition is skewed to acidic residues. Polar residues-rich tracts occupy residues 129–143 (DKSS…QAQA) and 183–194 (SDTQFPSPQATA). A compositionally biased stretch (basic and acidic residues) spans 195 to 213 (KHTESRREKEMEKTFEIVK).

The protein belongs to the CDV3 family.

The protein localises to the cytoplasm. This chain is Protein CDV3 homolog B (cdv3-b), found in Xenopus laevis (African clawed frog).